A 420-amino-acid polypeptide reads, in one-letter code: Cytoplasmic tRNA 2-thiolation protein 1 (420 aa).

Ser-200 is subject to Phosphoserine.

The protein belongs to the TtcA family. CTU1/NCS6/ATPBD3 subfamily. Component of a complex at least composed of URM1, CTU2/NCS2 and CTU1/ATPBD3. May form a heterodimer with CTU2/NCS2.

Its subcellular location is the cytoplasm. The protein operates within tRNA modification; 5-methoxycarbonylmethyl-2-thiouridine-tRNA biosynthesis. Its function is as follows. Plays a central role in 2-thiolation of mcm(5)S(2)U at tRNA wobble positions of tRNA(Lys), tRNA(Glu) and tRNA(Gln). Directly binds tRNAs and probably acts by catalyzing adenylation of tRNAs, an intermediate required for 2-thiolation. It is unclear whether it acts as a sulfurtransferase that transfers sulfur from thiocarboxylated URM1 onto the uridine of tRNAs at wobble position. This is Cytoplasmic tRNA 2-thiolation protein 1 (Ctu1) from Mus musculus (Mouse).